The sequence spans 1054 residues: Trehalose synthase complex regulatory subunit TPS3 (1054 aa).

The tract at residues 112-133 (AANSGIPPANNPVSSGSTAQRP) is disordered. Positions 122–132 (NPVSSGSTAQR) are enriched in polar residues. Phosphoserine occurs at positions 148, 150, and 181. 2 disordered regions span residues 155–203 (ASSI…PVSK) and 223–250 (QQQA…SSSN). Residues 170-182 (LSSSLMKNPNLSF) are compositionally biased toward polar residues. Over residues 235–249 (SGSTAGDSSIASSSS) the composition is skewed to low complexity. T265 carries the post-translational modification Phosphothreonine. A phosphoserine mark is found at S267 and S273. The tract at residues 287–778 (KFGGYSNNAK…SNQETSTVFN (492 aa)) is glycosyltransferase. The residue at position 960 (S960) is a Phosphoserine.

In the N-terminal section; belongs to the glycosyltransferase 20 family. As to quaternary structure, the trehalose synthase complex is composed of the two catalytic subunits TPS1 and TPS2 and at least one of the two regulatory subunits TPS3 or TSL1.

It localises to the cytoplasm. Regulatory subunit of the trehalose synthase complex that catalyzes the production of trehalose from glucose-6-phosphate and UDP-glucose in a two step process. May stabilize the trehalose synthase complex. This Saccharomyces cerevisiae (strain ATCC 204508 / S288c) (Baker's yeast) protein is Trehalose synthase complex regulatory subunit TPS3 (TPS3).